Reading from the N-terminus, the 223-residue chain is Ribonuclease 3 (223 aa).

In terms of domain architecture, RNase III spans 4-127 (LNRLEEHLGY…LMGAIYLESG (124 aa)). E40 contacts Mg(2+). D44 is a catalytic residue. Mg(2+)-binding residues include D113 and E116. E116 is an active-site residue. The DRBM domain maps to 154 to 223 (DYKTTLQEIT…AWKVLQGMNI (70 aa)).

It belongs to the ribonuclease III family. In terms of assembly, homodimer. Mg(2+) serves as cofactor.

The protein resides in the cytoplasm. It carries out the reaction Endonucleolytic cleavage to 5'-phosphomonoester.. Digests double-stranded RNA. Involved in the processing of primary rRNA transcript to yield the immediate precursors to the large and small rRNAs (23S and 16S). Processes some mRNAs, and tRNAs when they are encoded in the rRNA operon. Processes pre-crRNA and tracrRNA of type II CRISPR loci if present in the organism. This Campylobacter fetus subsp. fetus (strain 82-40) protein is Ribonuclease 3.